Here is a 96-residue protein sequence, read N- to C-terminus: Small ribosomal subunit protein bS16 (96 aa).

Belongs to the bacterial ribosomal protein bS16 family.

The chain is Small ribosomal subunit protein bS16 from Oenococcus oeni (strain ATCC BAA-331 / PSU-1).